The primary structure comprises 391 residues: 1-deoxy-D-xylulose 5-phosphate reductoisomerase (391 aa).

N109 serves as a coordination point for NADPH. K110 is a binding site for 1-deoxy-D-xylulose 5-phosphate. E111 lines the NADPH pocket. D135 provides a ligand contact to Mn(2+). 4 residues coordinate 1-deoxy-D-xylulose 5-phosphate: S136, E137, S171, and H194. Mn(2+) is bound at residue E137. G200 provides a ligand contact to NADPH. 1-deoxy-D-xylulose 5-phosphate contacts are provided by S207, N212, R213, and E216. E216 contributes to the Mn(2+) binding site.

It belongs to the DXR family. As to quaternary structure, homodimer. Mg(2+) is required as a cofactor. Mn(2+) serves as cofactor.

It carries out the reaction 2-C-methyl-D-erythritol 4-phosphate + NADP(+) = 1-deoxy-D-xylulose 5-phosphate + NADPH + H(+). The protein operates within isoprenoid biosynthesis; isopentenyl diphosphate biosynthesis via DXP pathway; isopentenyl diphosphate from 1-deoxy-D-xylulose 5-phosphate: step 1/6. In terms of biological role, catalyzes the NADPH-dependent rearrangement and reduction of 1-deoxy-D-xylulose-5-phosphate (DXP) to 2-C-methyl-D-erythritol 4-phosphate (MEP). The chain is 1-deoxy-D-xylulose 5-phosphate reductoisomerase from Blochmanniella floridana.